Here is a 557-residue protein sequence, read N- to C-terminus: Putative sensory transducer protein (557 aa).

Residues 122–145 (TASTVMIVVIFVGILIAIALGVFI) traverse the membrane as a helical segment. An HAMP domain is found at 147-199 (RIISKPIGQMVEAADRLALGDVEVDVKAETRDEIGKLAESFKRMIENIREQAY). The Methyl-accepting transducer domain maps to 243–472 (VAAQVAAGAK…ESAAASEELS (230 aa)). Gln-268 carries the post-translational modification Glutamate methyl ester (Gln). Position 274 is a glutamate methyl ester (Glu) (Glu-274). The residue at position 281 (Gln-281) is a Glutamate methyl ester (Gln). Glu-463 carries the glutamate methyl ester (Glu) modification. The segment covering 511-541 (DYTENKQPKSYSKEENGEYSDGKETAEKDVG) has biased composition (basic and acidic residues). The disordered stretch occupies residues 511–542 (DYTENKQPKSYSKEENGEYSDGKETAEKDVGG).

The protein belongs to the methyl-accepting chemotaxis (MCP) protein family.

It is found in the cell membrane. In terms of biological role, may bind attractants or detect changes in the extracellular concentration of soluble sugars. The protein is Putative sensory transducer protein of Acetivibrio thermocellus (strain ATCC 27405 / DSM 1237 / JCM 9322 / NBRC 103400 / NCIMB 10682 / NRRL B-4536 / VPI 7372) (Clostridium thermocellum).